The chain runs to 862 residues: Putative cargo-transport protein ypp1 (862 aa).

TPR repeat units lie at residues 342-377, 460-493, and 494-527; these read QQIFRSLVFFLRHIEEFEEASEAFEIYKFLCVKSHE, SFMYYQANNPSLRERYHQKSVQSYQKCLEKQPTN, and TNALFHLAMQYSERRAITDAMQIVRRLLEVNPKY. Phosphoserine occurs at positions 632, 633, and 637. TPR repeat units follow at residues 665 to 698, 705 to 738, 740 to 772, and 814 to 847; these read ILGFSRKSSLKRSTVLSKKSHSSYKENFQLRRGK, QKLWLTAASLFLKSGNDDQARSALLEAKKIDHEC, WVYYLNGLSLLQQGKEVEGYEQLDVAHYLDPED, and PEAWYYTAEIFRQLGDLKQAAFSYDYCIQLADTN.

The protein belongs to the YPP1 family.

It localises to the cytoplasm. Functionally, involved in endocytosis. The sequence is that of Putative cargo-transport protein ypp1 (ypp1) from Schizosaccharomyces pombe (strain 972 / ATCC 24843) (Fission yeast).